Here is a 1429-residue protein sequence, read N- to C-terminus: Autophagy-related protein 11 (1429 aa).

Residues 71 to 99 are disordered; that stretch reads TQRSQPGASSPPLSELPLPRYNAHTPPNS. The span at 80–89 shows a compositional bias: low complexity; the sequence is SPPLSELPLP. 4 coiled-coil regions span residues 143–173, 553–590, 632–815, and 851–989; these read VMLRCLDAAVANLENAVKGLENKYVELKEWS, DDLLRSLQADKTRLESKLKTAESRVRRLEDLLHRQTQA, LETL…LEDI, and EGDM…RLES. The interval 1024-1061 is disordered; sequence DGTMHIQRTPRSERSLATTANPNDSDPSSSLRRSSTLN. Low complexity predominate over residues 1042–1061; sequence TANPNDSDPSSSLRRSSTLN. The stretch at 1105–1143 forms a coiled coil; that stretch reads ADAVYRRVKDVEHMARKLQREARAYREKAHSFQKEAHDK. Over residues 1209–1229 the composition is skewed to basic and acidic residues; the sequence is SKSLQHDQAGETRKDGARGET. Disordered stretches follow at residues 1209-1241 and 1336-1429; these read SKSLQHDQAGETRKDGARGETESLDDDENDNPF and SSRG…LIGP. Acidic residues predominate over residues 1230-1239; that stretch reads ESLDDDENDN. 2 stretches are compositionally biased toward polar residues: residues 1345-1372 and 1383-1393; these read ASETNSLRAVPADNNSSAPTNAAQQHMS and QETPQQTNSIS.

It belongs to the ATG11 family. In terms of assembly, homodimer.

The protein resides in the preautophagosomal structure membrane. Its subcellular location is the vacuole membrane. Its function is as follows. Involved in cytoplasm to vacuole transport (Cvt), pexophagy, mitophagy and nucleophagy. Recruits mitochondria for their selective degradation via autophagy (mitophagy) during starvation. Works as scaffold proteins that recruit ATG proteins to the pre-autophagosome (PAS), the site of vesicle/autophagosome formation. Required for the Cvt vesicles completion. The sequence is that of Autophagy-related protein 11 (apg-8) from Neurospora crassa (strain ATCC 24698 / 74-OR23-1A / CBS 708.71 / DSM 1257 / FGSC 987).